Consider the following 313-residue polypeptide: NADH-ubiquinone oxidoreductase chain 2 (313 aa).

10 consecutive transmembrane segments (helical) span residues 3 to 23 (IWII…FIFW), 47 to 67 (SMIT…ISSF), 81 to 101 (INIS…LIMI), 105 to 125 (LTFY…LLII), 128 to 148 (FMNS…SIMA), 153 to 173 (LIKQ…LCLI), 177 to 197 (MNFW…IIIN), 220 to 240 (NTMI…GFFM), 253 to 275 (LIFM…RILT), and 293 to 313 (KSNF…NIFF).

This sequence belongs to the complex I subunit 2 family.

The protein resides in the mitochondrion inner membrane. The enzyme catalyses a ubiquinone + NADH + 5 H(+)(in) = a ubiquinol + NAD(+) + 4 H(+)(out). Its function is as follows. Core subunit of the mitochondrial membrane respiratory chain NADH dehydrogenase (Complex I) that is believed to belong to the minimal assembly required for catalysis. Complex I functions in the transfer of electrons from NADH to the respiratory chain. The immediate electron acceptor for the enzyme is believed to be ubiquinone. The polypeptide is NADH-ubiquinone oxidoreductase chain 2 (ND2) (Rhipicephalus sanguineus (Brown dog tick)).